Here is a 61-residue protein sequence, read N- to C-terminus: Large ribosomal subunit protein uL30 (61 aa).

The protein belongs to the universal ribosomal protein uL30 family. As to quaternary structure, part of the 50S ribosomal subunit.

This Frankia alni (strain DSM 45986 / CECT 9034 / ACN14a) protein is Large ribosomal subunit protein uL30.